Reading from the N-terminus, the 919-residue chain is Rho guanine nucleotide exchange factor 1 (919 aa).

The 192-residue stretch at 39 to 230 (DQNSQFQSLE…SLYMRHLGVR (192 aa)) folds into the RGSL domain. Residues 247-402 (VMGNRRSDEP…PPGWRELVPS (156 aa)) are disordered. Basic and acidic residues predominate over residues 281–310 (DCRHLKVEVDEKPGPADRKGSLGISSRDRT). A compositionally biased stretch (acidic residues) spans 363–379 (STEDNGETESPEPGDDG). Ser-372 carries the phosphoserine modification. Residues 414–603 (KRQEVISELL…REILHHVNQA (190 aa)) form the DH domain. Positions 645-758 (KLVHEGPLTW…WCALITETAG (114 aa)) constitute a PH domain. Residue Thr-693 is modified to Phosphothreonine. Tyr-736 is modified (phosphotyrosine; by JAK2). Disordered stretches follow at residues 761-800 (KVPA…PADA) and 839-865 (TEED…PTHT). Residues 775–787 (PSSTREPLLSSSE) are compositionally biased toward low complexity. The stretch at 864–893 (HTQEVEENLLSLEVVIKQLEELEEEFCRLR) forms a coiled coil. Ser-904 carries the post-translational modification Phosphoserine.

As to quaternary structure, interacts with RHOA, GNA12 and GNA13. Homooligomerizes through the coiled coil region. Interacts with CTNNAL1. May interact with CCPG1. In terms of processing, phosphorylated by PKCA. Angiotensin-2 induced Tyr-736 phosphorylation is mediated by JAK2.

The protein localises to the cytoplasm. It localises to the membrane. Functionally, seems to play a role in the regulation of RhoA GTPase by guanine nucleotide-binding alpha-12 (GNA12) and alpha-13 (GNA13) subunits. Acts as a GTPase-activating protein (GAP) for GNA12 and GNA13, and as guanine nucleotide exchange factor (GEF) for RhoA GTPase. Activated G alpha 13/GNA13 stimulates the RhoGEF activity through interaction with the RGS-like domain. This GEF activity is inhibited by binding to activated GNA12. Mediates angiotensin-2-induced RhoA activation. In lymphoid follicles, may trigger activation of GNA13 as part of S1PR2-dependent signaling pathway that leads to inhibition of germinal center (GC) B cell growth and migration outside the GC niche. This Rattus norvegicus (Rat) protein is Rho guanine nucleotide exchange factor 1 (Arhgef1).